Reading from the N-terminus, the 83-residue chain is Small ribosomal subunit protein bS16 (83 aa).

This sequence belongs to the bacterial ribosomal protein bS16 family.

This chain is Small ribosomal subunit protein bS16, found in Chromobacterium violaceum (strain ATCC 12472 / DSM 30191 / JCM 1249 / CCUG 213 / NBRC 12614 / NCIMB 9131 / NCTC 9757 / MK).